The primary structure comprises 421 residues: ATP-dependent RNA helicase RhlB (421 aa).

Positions 9–37 (QKFSDFALHPVVVQALEKKGFYNCTPIQA) match the Q motif motif. Residues 40–219 (LPLTLAGRDV…FEQMNNAEYV (180 aa)) enclose the Helicase ATP-binding domain. Position 53 to 60 (53 to 60 (AQTGTGKT)) interacts with ATP. The DEAD box motif lies at 165-168 (DEAD). A Helicase C-terminal domain is found at 245-390 (RLLQTLIEEE…VSKYNPDALL (146 aa)). The segment at 390–421 (LSELPPPKRLSRPRTGNGPRRSGAPRNRRRTG) is disordered. Positions 405–414 (GNGPRRSGAP) are enriched in low complexity.

Belongs to the DEAD box helicase family. RhlB subfamily. As to quaternary structure, component of the RNA degradosome, which is a multiprotein complex involved in RNA processing and mRNA degradation.

The protein resides in the cytoplasm. The catalysed reaction is ATP + H2O = ADP + phosphate + H(+). Its function is as follows. DEAD-box RNA helicase involved in RNA degradation. Has RNA-dependent ATPase activity and unwinds double-stranded RNA. This Cronobacter sakazakii (strain ATCC BAA-894) (Enterobacter sakazakii) protein is ATP-dependent RNA helicase RhlB.